The primary structure comprises 533 residues: GMP synthase [glutamine-hydrolyzing] (533 aa).

The region spanning 22-215 is the Glutamine amidotransferase type-1 domain; sequence RILILDFGSQ…THNVAGCSGT (194 aa). Catalysis depends on Cys99, which acts as the Nucleophile. Residues His189 and Glu191 contribute to the active site. The region spanning 216-408 is the GMPS ATP-PPase domain; it reads WTMAGFRELE…LGIPESIVGR (193 aa). Residue 243–249 participates in ATP binding; it reads SGGVDSS.

As to quaternary structure, homodimer.

The catalysed reaction is XMP + L-glutamine + ATP + H2O = GMP + L-glutamate + AMP + diphosphate + 2 H(+). Its pathway is purine metabolism; GMP biosynthesis; GMP from XMP (L-Gln route): step 1/1. In terms of biological role, catalyzes the synthesis of GMP from XMP. In Gluconobacter oxydans (strain 621H) (Gluconobacter suboxydans), this protein is GMP synthase [glutamine-hydrolyzing].